A 496-amino-acid polypeptide reads, in one-letter code: 3-octaprenyl-4-hydroxybenzoate carboxy-lyase (496 aa).

N181 lines the Mn(2+) pocket. Residues 184–186, 198–200, and 203–204 contribute to the prenylated FMN site; these read IYR, RWL, and RG. Position 247 (E247) interacts with Mn(2+). The Proton donor role is filled by D296.

Belongs to the UbiD family. Homohexamer. Prenylated FMN is required as a cofactor. Mn(2+) serves as cofactor.

Its subcellular location is the cell membrane. The catalysed reaction is a 4-hydroxy-3-(all-trans-polyprenyl)benzoate + H(+) = a 2-(all-trans-polyprenyl)phenol + CO2. Its pathway is cofactor biosynthesis; ubiquinone biosynthesis. Catalyzes the decarboxylation of 3-octaprenyl-4-hydroxy benzoate to 2-octaprenylphenol, an intermediate step in ubiquinone biosynthesis. The polypeptide is 3-octaprenyl-4-hydroxybenzoate carboxy-lyase (Azoarcus sp. (strain BH72)).